The chain runs to 77 residues: Translation initiation factor IF-1, chloroplastic (77 aa).

Residues 1 to 71 (MKEQKLIHEG…TRGRIIYRLR (71 aa)) enclose the S1-like domain.

It belongs to the IF-1 family. As to quaternary structure, component of the 30S ribosomal translation pre-initiation complex which assembles on the 30S ribosome in the order IF-2 and IF-3, IF-1 and N-formylmethionyl-tRNA(fMet); mRNA recruitment can occur at any time during PIC assembly.

It localises to the plastid. It is found in the chloroplast. Functionally, one of the essential components for the initiation of protein synthesis. Stabilizes the binding of IF-2 and IF-3 on the 30S subunit to which N-formylmethionyl-tRNA(fMet) subsequently binds. Helps modulate mRNA selection, yielding the 30S pre-initiation complex (PIC). Upon addition of the 50S ribosomal subunit IF-1, IF-2 and IF-3 are released leaving the mature 70S translation initiation complex. This is Translation initiation factor IF-1, chloroplastic from Liriodendron tulipifera (Tuliptree).